The primary structure comprises 178 residues: PEST proteolytic signal-containing nuclear protein (178 aa).

The segment covering 1-15 (MADGKAGDEKPEKSQ) has biased composition (basic and acidic residues). A disordered region spans residues 1–82 (MADGKAGDEK…FAIGSQTTKK (82 aa)). Ala-2 carries the N-acetylalanine modification. Residues 37–47 (SSSNGGESSSR) show a composition bias toward low complexity. Ser-53 bears the Phosphoserine mark. Lys-64 carries the N6-acetyllysine modification. Phosphoserine is present on residues Ser-77, Ser-87, and Ser-119. Positions 134-178 (NIGRDTPTSAGPNSFNKGKHGFSDNQKLWERNIKSHLGNVHDQDN) are disordered. The residue at position 139 (Thr-139) is a Phosphothreonine. Residues 139-149 (TPTSAGPNSFN) are compositionally biased toward polar residues. Position 147 is a phosphoserine (Ser-147). Lys-150 and Lys-152 each carry N6-acetyllysine. Over residues 160 to 178 (KLWERNIKSHLGNVHDQDN) the composition is skewed to basic and acidic residues.

In terms of assembly, interacts with UHRF2/NIRF. In terms of processing, ubiquitinated; mediated by UHRF2 and leading to its subsequent proteasomal degradation. N-terminally acetylated in a HYPK-dependent manner by the NatA acetyltransferase complex which is composed of NAA10 and NAA15.

The protein localises to the nucleus. Functionally, may be involved in cell cycle regulation. The polypeptide is PEST proteolytic signal-containing nuclear protein (PCNP) (Homo sapiens (Human)).